A 145-amino-acid chain; its full sequence is D-aminoacyl-tRNA deacylase (145 aa).

Residues 137–138 (GP) carry the Gly-cisPro motif, important for rejection of L-amino acids motif.

It belongs to the DTD family. As to quaternary structure, homodimer.

The protein resides in the cytoplasm. It carries out the reaction glycyl-tRNA(Ala) + H2O = tRNA(Ala) + glycine + H(+). The enzyme catalyses a D-aminoacyl-tRNA + H2O = a tRNA + a D-alpha-amino acid + H(+). In terms of biological role, an aminoacyl-tRNA editing enzyme that deacylates mischarged D-aminoacyl-tRNAs. Also deacylates mischarged glycyl-tRNA(Ala), protecting cells against glycine mischarging by AlaRS. Acts via tRNA-based rather than protein-based catalysis; rejects L-amino acids rather than detecting D-amino acids in the active site. By recycling D-aminoacyl-tRNA to D-amino acids and free tRNA molecules, this enzyme counteracts the toxicity associated with the formation of D-aminoacyl-tRNA entities in vivo and helps enforce protein L-homochirality. This Exiguobacterium sibiricum (strain DSM 17290 / CCUG 55495 / CIP 109462 / JCM 13490 / 255-15) protein is D-aminoacyl-tRNA deacylase.